Reading from the N-terminus, the 95-residue chain is Acylphosphatase (95 aa).

One can recognise an Acylphosphatase-like domain in the interval 10-95; it reads CIHATVSGKV…VEDYSDFRVR (86 aa). Active-site residues include Arg-25 and Asn-43.

This sequence belongs to the acylphosphatase family.

It catalyses the reaction an acyl phosphate + H2O = a carboxylate + phosphate + H(+). The chain is Acylphosphatase (acyP) from Coxiella burnetii (strain Dugway 5J108-111).